The chain runs to 527 residues: Phosphoenolpyruvate carboxykinase (ATP) (527 aa).

Arg56, Tyr192, and Lys198 together coordinate substrate. ATP contacts are provided by residues Lys198, His217, and 233–241; that span reads GLSGTGKTT. Mn(2+) is bound by residues Lys198 and His217. Asp254 provides a ligand contact to Mn(2+). Residues Glu282, Arg319, and Thr444 each contribute to the ATP site. Residue Arg319 coordinates substrate.

Belongs to the phosphoenolpyruvate carboxykinase (ATP) family. Mn(2+) is required as a cofactor.

The protein localises to the cytoplasm. The catalysed reaction is oxaloacetate + ATP = phosphoenolpyruvate + ADP + CO2. Its pathway is carbohydrate biosynthesis; gluconeogenesis. Functionally, involved in the gluconeogenesis. Catalyzes the conversion of oxaloacetate (OAA) to phosphoenolpyruvate (PEP) through direct phosphoryl transfer between the nucleoside triphosphate and OAA. This chain is Phosphoenolpyruvate carboxykinase (ATP), found in Bacillus velezensis (strain DSM 23117 / BGSC 10A6 / LMG 26770 / FZB42) (Bacillus amyloliquefaciens subsp. plantarum).